Consider the following 353-residue polypeptide: JmjC domain-containing protein E (353 aa).

Residues 138–348 (YYIQYQNNSL…ETTKYQKQIK (211 aa)) form the JmjC domain.

This Dictyostelium discoideum (Social amoeba) protein is JmjC domain-containing protein E (jcdE).